Reading from the N-terminus, the 307-residue chain is Methionyl-tRNA formyltransferase (307 aa).

Position 108-111 (108-111 (SLLP)) interacts with (6S)-5,6,7,8-tetrahydrofolate.

The protein belongs to the Fmt family.

The catalysed reaction is L-methionyl-tRNA(fMet) + (6R)-10-formyltetrahydrofolate = N-formyl-L-methionyl-tRNA(fMet) + (6S)-5,6,7,8-tetrahydrofolate + H(+). Attaches a formyl group to the free amino group of methionyl-tRNA(fMet). The formyl group appears to play a dual role in the initiator identity of N-formylmethionyl-tRNA by promoting its recognition by IF2 and preventing the misappropriation of this tRNA by the elongation apparatus. This chain is Methionyl-tRNA formyltransferase, found in Renibacterium salmoninarum (strain ATCC 33209 / DSM 20767 / JCM 11484 / NBRC 15589 / NCIMB 2235).